A 382-amino-acid polypeptide reads, in one-letter code: L-lysine 4-hydroxylase (382 aa).

Fe cation-binding residues include histidine 182, glutamate 184, and histidine 318.

It belongs to the clavaminate synthase family. Requires Fe(2+) as cofactor.

The enzyme catalyses L-lysine + 2-oxoglutarate + O2 = (4R)-4-hydroxy-L-lysine + succinate + CO2. Its function is as follows. Alpha-ketoglutarate-dependent dioxygenase that in vitro catalyzes the regio- and stereoselective hydroxylation of L-lysine, leading to (4R)-4-hydroxy-L-lysine. Cannot use D-lysine or L-ornithine as substrate. This Chitinophaga pinensis (strain ATCC 43595 / DSM 2588 / LMG 13176 / NBRC 15968 / NCIMB 11800 / UQM 2034) protein is L-lysine 4-hydroxylase.